Consider the following 880-residue polypeptide: Phosphoinositide 3-kinase regulatory subunit 5 (880 aa).

Methionine 1 carries the N-acetylmethionine modification. Positions serine 25–leucine 101 are heterodimerization. 4 disordered regions span residues glycine 315–histidine 339, serine 389–arginine 416, arginine 454–glutamate 510, and histidine 565–glutamate 601. Over residues glycine 318–glutamate 335 the composition is skewed to acidic residues. Phosphoserine occurs at positions 458 and 507. Pro residues predominate over residues alanine 571–aspartate 585. Positions proline 653–serine 753 are interaction with beta-gamma G protein dimers.

Heterodimer of a catalytic subunit (PIK3CG/p120) and a regulatory (PIK3R5a/p101) subunit. Interacts with beta-gamma G protein dimers. As to expression, ubiquitously expressed with high expression in fetal brain compared to adult brain. Abundant expression is observed in cerebellum, cerebral cortex, cerebral meninges, and vermis cerebelli.

The protein localises to the nucleus. It localises to the cytoplasm. The protein resides in the cell membrane. With respect to regulation, greatly activated by G gamma proteins. Functionally, regulatory subunit of the PI3K gamma complex. Required for recruitment of the catalytic subunit to the plasma membrane via interaction with beta-gamma G protein dimers. Required for G protein-mediated activation of PIK3CG. This chain is Phosphoinositide 3-kinase regulatory subunit 5 (PIK3R5), found in Homo sapiens (Human).